Consider the following 978-residue polypeptide: uncharacterized protein (978 aa).

A signal peptide spans 1–27; that stretch reads MHSWKKKLVVSQLALACTLAITSQANA. An Autotransporter domain is found at 713–978; that stretch reads GLADNGGAWV…SANVGVKYTW (266 aa).

This is an uncharacterized protein from Salmonella typhimurium (strain LT2 / SGSC1412 / ATCC 700720).